A 97-amino-acid polypeptide reads, in one-letter code: Venom peptide HsVx1 (97 aa).

The first 20 residues, 1–20 (MSHLRIAVTFLCTLFALTAG), serve as a signal peptide directing secretion.

It belongs to the scorpion La1-like peptide family. Post-translationally, contains 4 disulfide bonds. In terms of tissue distribution, expressed by the venom gland.

It is found in the secreted. This is Venom peptide HsVx1 from Heterometrus spinifer (Asia giant forest scorpion).